The chain runs to 274 residues: Large ribosomal subunit protein uL2 (274 aa).

The tract at residues 222–257 (GVAMNPVDHPHGGGEGRTSGGRHPVSPWGVPTKGYK) is disordered.

This sequence belongs to the universal ribosomal protein uL2 family. Part of the 50S ribosomal subunit. Forms a bridge to the 30S subunit in the 70S ribosome.

One of the primary rRNA binding proteins. Required for association of the 30S and 50S subunits to form the 70S ribosome, for tRNA binding and peptide bond formation. It has been suggested to have peptidyltransferase activity; this is somewhat controversial. Makes several contacts with the 16S rRNA in the 70S ribosome. The chain is Large ribosomal subunit protein uL2 from Nitrosococcus oceani (strain ATCC 19707 / BCRC 17464 / JCM 30415 / NCIMB 11848 / C-107).